The sequence spans 139 residues: Ribonuclease VapC3 (139 aa).

Residues 14–121 (EAIVLDTGAF…VATDDYTLQR (108 aa)) form the PINc domain. A Mg(2+)-binding site is contributed by Asp19.

This sequence belongs to the PINc/VapC protein family. Mg(2+) is required as a cofactor.

Functionally, toxic component of a type II toxin-antitoxin (TA) system. An RNase. This Aeropyrum pernix (strain ATCC 700893 / DSM 11879 / JCM 9820 / NBRC 100138 / K1) protein is Ribonuclease VapC3.